The primary structure comprises 228 residues: Sugar fermentation stimulation protein homolog (228 aa).

Belongs to the SfsA family.

This is Sugar fermentation stimulation protein homolog from Desulfitobacterium hafniense (strain Y51).